Consider the following 140-residue polypeptide: Large ribosomal subunit protein bL17 (140 aa).

The disordered stretch occupies residues 120-140 (EDAKGQDSGPVMVDEDDFAEA).

The protein belongs to the bacterial ribosomal protein bL17 family. In terms of assembly, part of the 50S ribosomal subunit. Contacts protein L32.

The chain is Large ribosomal subunit protein bL17 from Erythrobacter litoralis (strain HTCC2594).